We begin with the raw amino-acid sequence, 730 residues long: Rap1 GTPase-activating protein 2 (730 aa).

Positions 247-463 (IVAYDEHEVN…RTRAALLDNL (217 aa)) constitute a Rap-GAP domain. Disordered regions lie at residues 510 to 668 (MVGS…STAS) and 698 to 730 (SRSP…STSH). 2 stretches are compositionally biased toward polar residues: residues 535-557 (GEVT…QSRS) and 597-612 (HSSQ…NPSS). A compositionally biased stretch (basic and acidic residues) spans 617-630 (PNKDRPFVKLKENG). Residues 631–651 (RSNISRSSSSTSSFSSTAGES) are compositionally biased toward low complexity. The span at 699–712 (RSPTDIKNRNSPRS) shows a compositional bias: polar residues.

It localises to the cytoplasm. In terms of biological role, GTPase activator for the nuclear Ras-related regulatory protein RAP-1A (KREV-1), converting it to the putatively inactive GDP-bound state. This is Rap1 GTPase-activating protein 2 (RAP1GAP2) from Gallus gallus (Chicken).